Reading from the N-terminus, the 309-residue chain is Glutaminase (309 aa).

Substrate-binding residues include Ser-64, Asn-114, Glu-160, Asn-167, Tyr-191, Tyr-243, and Val-261.

It belongs to the glutaminase family. As to quaternary structure, homotetramer.

It catalyses the reaction L-glutamine + H2O = L-glutamate + NH4(+). The sequence is that of Glutaminase from Rhizobium johnstonii (strain DSM 114642 / LMG 32736 / 3841) (Rhizobium leguminosarum bv. viciae).